A 475-amino-acid chain; its full sequence is Ribulose bisphosphate carboxylase large chain (475 aa).

Positions 1–2 (MS) are excised as a propeptide. Residue P3 is modified to N-acetylproline. K14 is subject to N6,N6,N6-trimethyllysine. Substrate-binding residues include N123 and T173. K175 serves as the catalytic Proton acceptor. Position 177 (K177) interacts with substrate. Positions 201, 203, and 204 each coordinate Mg(2+). K201 is modified (N6-carboxylysine). Catalysis depends on H294, which acts as the Proton acceptor. Substrate contacts are provided by R295, H327, and S379.

Belongs to the RuBisCO large chain family. Type I subfamily. Heterohexadecamer of 8 large chains and 8 small chains; disulfide-linked. The disulfide link is formed within the large subunit homodimers. It depends on Mg(2+) as a cofactor. The disulfide bond which can form in the large chain dimeric partners within the hexadecamer appears to be associated with oxidative stress and protein turnover.

The protein localises to the plastid. It is found in the chloroplast. It catalyses the reaction 2 (2R)-3-phosphoglycerate + 2 H(+) = D-ribulose 1,5-bisphosphate + CO2 + H2O. The catalysed reaction is D-ribulose 1,5-bisphosphate + O2 = 2-phosphoglycolate + (2R)-3-phosphoglycerate + 2 H(+). Its function is as follows. RuBisCO catalyzes two reactions: the carboxylation of D-ribulose 1,5-bisphosphate, the primary event in carbon dioxide fixation, as well as the oxidative fragmentation of the pentose substrate in the photorespiration process. Both reactions occur simultaneously and in competition at the same active site. This chain is Ribulose bisphosphate carboxylase large chain, found in Fagopyrum esculentum subsp. ancestrale (Wild buckwheat).